The following is a 61-amino-acid chain: Large ribosomal subunit protein bL28 (61 aa).

The tract at residues 1–26 is disordered; it reads MAKDFINGKRTQFGNKRSHALNSSRR. Over residues 9 to 25 the composition is skewed to polar residues; that stretch reads KRTQFGNKRSHALNSSR.

Belongs to the bacterial ribosomal protein bL28 family.

The chain is Large ribosomal subunit protein bL28 from Limosilactobacillus reuteri (strain DSM 20016) (Lactobacillus reuteri).